The primary structure comprises 170 residues: Adenine phosphoribosyltransferase (170 aa).

This sequence belongs to the purine/pyrimidine phosphoribosyltransferase family. In terms of assembly, homodimer.

It is found in the cytoplasm. It carries out the reaction AMP + diphosphate = 5-phospho-alpha-D-ribose 1-diphosphate + adenine. It functions in the pathway purine metabolism; AMP biosynthesis via salvage pathway; AMP from adenine: step 1/1. In terms of biological role, catalyzes a salvage reaction resulting in the formation of AMP, that is energically less costly than de novo synthesis. This chain is Adenine phosphoribosyltransferase, found in Bacillus anthracis (strain A0248).